We begin with the raw amino-acid sequence, 552 residues long: uncharacterized protein (552 aa).

Residues 1-59 (MPLEKTNTHDSTATVEDQEATDNPMHLTQSRMLDLAGNPNRTTSRQSETLFPNGVDLNY) form a disordered region. The span at 39 to 50 (PNRTTSRQSETL) shows a compositional bias: polar residues. Helical transmembrane passes span 116–136 (ITIVNSLLVVCSAFGSSVIAG), 158–178 (LMVVGFGIGPLVISPLSEMIG), 181–201 (IVYLVTLMIYIVLQIPCALAP), 203–223 (IACLLIVRFFCGCFGCTPLTL), 238–258 (GLAIAFFAAGPYAGPTLGPLV), 271–291 (WIFWVNMIYMFVMYLTLLPVP), 345–365 (ILVCISGYIALIYALLYGYFF), 383–403 (GLMFIPILVGVVGALSTTPFL), 424–444 (LVGMCIASPFIPTGLLIFAWT), 450–470 (IWIGPAFSGAPFGYGMVLFYF), 484–506 (CASALAAKTMVRSAGGAAFPLFI), and 519–539 (FFLLGMVAVAAIPIPFTFYLF).

This sequence belongs to the major facilitator superfamily.

Its subcellular location is the membrane. This is an uncharacterized protein from Schizosaccharomyces pombe (strain 972 / ATCC 24843) (Fission yeast).